A 378-amino-acid chain; its full sequence is MSETIQLAQKLIQTESVTPNDNGCQTLIADYLKPLGFDIEPMPFGEVENLWARAGKDGPVIVFAGHTDVVPTGPEEKWTHPPFSAHIDADGIMYGRGTADMKSSIACFMVATKQFIKQYPDFKGSIAFLITSDEEGPAVNGTVKVIEALEARNEKFEYCLVGEPSSSNTLGDSIKNGRRGSLSGHLTIKGIQGHIAYPQLAENPIHTLSPALSDMVNKVWDKGNDYFPPTSFQVSNIHSGTGATNVIPGDCVVDFNFRFSTEQTPESLKAGIHQILDSHQLNYDLDWNLSGLPFITPADGELIQAVSKAIEQEMGTTPELSTGGGTSDGRFIAQTGAQVIELGPLNDTIHKIDERVSVSDLEKLTQIYRNTLINLLVT.

Histidine 66 is a Zn(2+) binding site. Aspartate 68 is a catalytic residue. Aspartate 100 serves as a coordination point for Zn(2+). The active-site Proton acceptor is glutamate 134. Residues glutamate 135, glutamate 163, and histidine 350 each coordinate Zn(2+).

The protein belongs to the peptidase M20A family. DapE subfamily. Homodimer. The cofactor is Zn(2+). Co(2+) serves as cofactor.

It carries out the reaction N-succinyl-(2S,6S)-2,6-diaminopimelate + H2O = (2S,6S)-2,6-diaminopimelate + succinate. It participates in amino-acid biosynthesis; L-lysine biosynthesis via DAP pathway; LL-2,6-diaminopimelate from (S)-tetrahydrodipicolinate (succinylase route): step 3/3. Catalyzes the hydrolysis of N-succinyl-L,L-diaminopimelic acid (SDAP), forming succinate and LL-2,6-diaminopimelate (DAP), an intermediate involved in the bacterial biosynthesis of lysine and meso-diaminopimelic acid, an essential component of bacterial cell walls. In Hydrogenovibrio crunogenus (strain DSM 25203 / XCL-2) (Thiomicrospira crunogena), this protein is Succinyl-diaminopimelate desuccinylase.